Consider the following 561-residue polypeptide: uncharacterized protein (561 aa).

2 disordered regions span residues 369–390 and 429–515; these read SVPENGKPNMGRIPSAPSLSKG and EGLG…GESE. Residue S383 is modified to Phosphoserine. Over residues 465-503 the composition is skewed to polar residues; the sequence is NISPESSRFGTPSDPNSSSQSLGNEVLSRPNSNSNSAES.

This is an uncharacterized protein from Schizosaccharomyces pombe (strain 972 / ATCC 24843) (Fission yeast).